The sequence spans 162 residues: Transmembrane protein 92 (162 aa).

Positions 1–22 (MLDTWVWGTLTLTFGLLSSLQG) are cleaved as a signal peptide. The Extracellular portion of the chain corresponds to 23 to 63 (VSFNETANTCDILNCPKGFTCCVKECCPERKVWDPANDRFR). A helical transmembrane segment spans residues 64–84 (FLVILACIIFPILFICALVSL). The Cytoplasmic portion of the chain corresponds to 85–162 (FCPNCTELQH…QMRGRAYATL (78 aa)). Residues 134-162 (TPPTEPPPPYSLRPEGPAGQMRGRAYATL) are disordered.

The protein resides in the membrane. In Mus musculus (Mouse), this protein is Transmembrane protein 92 (Tmem92).